A 148-amino-acid polypeptide reads, in one-letter code: D-aminoacyl-tRNA deacylase (148 aa).

A Gly-cisPro motif, important for rejection of L-amino acids motif is present at residues 137 to 138 (GP).

It belongs to the DTD family. In terms of assembly, homodimer.

It is found in the cytoplasm. It catalyses the reaction glycyl-tRNA(Ala) + H2O = tRNA(Ala) + glycine + H(+). It carries out the reaction a D-aminoacyl-tRNA + H2O = a tRNA + a D-alpha-amino acid + H(+). Its function is as follows. An aminoacyl-tRNA editing enzyme that deacylates mischarged D-aminoacyl-tRNAs. Also deacylates mischarged glycyl-tRNA(Ala), protecting cells against glycine mischarging by AlaRS. Acts via tRNA-based rather than protein-based catalysis; rejects L-amino acids rather than detecting D-amino acids in the active site. By recycling D-aminoacyl-tRNA to D-amino acids and free tRNA molecules, this enzyme counteracts the toxicity associated with the formation of D-aminoacyl-tRNA entities in vivo and helps enforce protein L-homochirality. The polypeptide is D-aminoacyl-tRNA deacylase (Oenococcus oeni (strain ATCC BAA-331 / PSU-1)).